Consider the following 154-residue polypeptide: Ribosome maturation factor RimP (154 aa).

The protein belongs to the RimP family.

The protein resides in the cytoplasm. Functionally, required for maturation of 30S ribosomal subunits. In Prochlorococcus marinus (strain MIT 9313), this protein is Ribosome maturation factor RimP.